Reading from the N-terminus, the 333-residue chain is CRISPR-associated endonuclease Cas1 (333 aa).

The Mn(2+) site is built by glutamate 162, histidine 226, and glutamate 241.

The protein belongs to the CRISPR-associated endonuclease Cas1 family. As to quaternary structure, homodimer, forms a heterotetramer with a Cas2 homodimer. The cofactor is Mg(2+). It depends on Mn(2+) as a cofactor.

Its function is as follows. CRISPR (clustered regularly interspaced short palindromic repeat), is an adaptive immune system that provides protection against mobile genetic elements (viruses, transposable elements and conjugative plasmids). CRISPR clusters contain spacers, sequences complementary to antecedent mobile elements, and target invading nucleic acids. CRISPR clusters are transcribed and processed into CRISPR RNA (crRNA). Acts as a dsDNA endonuclease. Involved in the integration of spacer DNA into the CRISPR cassette. The chain is CRISPR-associated endonuclease Cas1 from Nanoarchaeum equitans (strain Kin4-M).